The following is a 92-amino-acid chain: Small ribosomal subunit protein uS19 (92 aa).

It belongs to the universal ribosomal protein uS19 family.

Functionally, protein S19 forms a complex with S13 that binds strongly to the 16S ribosomal RNA. The chain is Small ribosomal subunit protein uS19 from Dinoroseobacter shibae (strain DSM 16493 / NCIMB 14021 / DFL 12).